Reading from the N-terminus, the 284-residue chain is Tropomyosin (284 aa).

The stretch at 1 to 284 (MDAIKKKMLM…DQALNELHNM (284 aa)) forms a coiled coil. Disordered regions lie at residues 106 to 134 (LNST…ENRQ) and 186 to 221 (AETK…EEAY). Basic and acidic residues-rich tracts occupy residues 112 to 134 (KLTD…ENRQ) and 186 to 198 (AETK…DELK).

This sequence belongs to the tropomyosin family. As to quaternary structure, homodimer.

In terms of biological role, tropomyosin, in association with the troponin complex, plays a central role in the calcium dependent regulation of muscle contraction. The protein is Tropomyosin (TPM) of Branchiostoma belcheri (Amphioxus).